Consider the following 390-residue polypeptide: Chorismate synthase 2 (390 aa).

Positions 39 and 45 each coordinate NADP(+). FMN is bound by residues 132-134 (RSS), 253-254 (NA), G298, 313-317 (KPIPT), and R339.

This sequence belongs to the chorismate synthase family. Homotetramer. Requires FMNH2 as cofactor.

It carries out the reaction 5-O-(1-carboxyvinyl)-3-phosphoshikimate = chorismate + phosphate. It participates in metabolic intermediate biosynthesis; chorismate biosynthesis; chorismate from D-erythrose 4-phosphate and phosphoenolpyruvate: step 7/7. Catalyzes the anti-1,4-elimination of the C-3 phosphate and the C-6 proR hydrogen from 5-enolpyruvylshikimate-3-phosphate (EPSP) to yield chorismate, which is the branch point compound that serves as the starting substrate for the three terminal pathways of aromatic amino acid biosynthesis. This reaction introduces a second double bond into the aromatic ring system. The polypeptide is Chorismate synthase 2 (Bacillus thuringiensis (strain Al Hakam)).